The sequence spans 195 residues: Imidazoleglycerol-phosphate dehydratase (195 aa).

It belongs to the imidazoleglycerol-phosphate dehydratase family.

The protein localises to the cytoplasm. The catalysed reaction is D-erythro-1-(imidazol-4-yl)glycerol 3-phosphate = 3-(imidazol-4-yl)-2-oxopropyl phosphate + H2O. The protein operates within amino-acid biosynthesis; L-histidine biosynthesis; L-histidine from 5-phospho-alpha-D-ribose 1-diphosphate: step 6/9. This Alkaliphilus metalliredigens (strain QYMF) protein is Imidazoleglycerol-phosphate dehydratase.